The primary structure comprises 201 residues: Large ribosomal subunit protein uL4 (201 aa).

The tract at residues 45-66 (AQLTRSEVSGGGKKPWRQKGTG) is disordered.

Belongs to the universal ribosomal protein uL4 family. In terms of assembly, part of the 50S ribosomal subunit.

In terms of biological role, one of the primary rRNA binding proteins, this protein initially binds near the 5'-end of the 23S rRNA. It is important during the early stages of 50S assembly. It makes multiple contacts with different domains of the 23S rRNA in the assembled 50S subunit and ribosome. Forms part of the polypeptide exit tunnel. The polypeptide is Large ribosomal subunit protein uL4 (Aeromonas salmonicida (strain A449)).